Here is a 364-residue protein sequence, read N- to C-terminus: Glutamate 5-kinase (364 aa).

Lys-7 provides a ligand contact to ATP. Residues Ser-47, Asp-134, and Asn-146 each coordinate substrate. ATP is bound by residues 166-167 (TD) and 209-215 (TGGIKTK). The 76-residue stretch at 274 to 349 (QGTLHVDDGA…NRIKSTQYPV (76 aa)) folds into the PUA domain.

This sequence belongs to the glutamate 5-kinase family.

The protein localises to the cytoplasm. The catalysed reaction is L-glutamate + ATP = L-glutamyl 5-phosphate + ADP. It functions in the pathway amino-acid biosynthesis; L-proline biosynthesis; L-glutamate 5-semialdehyde from L-glutamate: step 1/2. Its function is as follows. Catalyzes the transfer of a phosphate group to glutamate to form L-glutamate 5-phosphate. The polypeptide is Glutamate 5-kinase (Prochlorococcus marinus (strain SARG / CCMP1375 / SS120)).